The primary structure comprises 500 residues: Probable cytosol aminopeptidase (500 aa).

Mn(2+) contacts are provided by Lys261 and Asp266. Lys273 is a catalytic residue. 3 residues coordinate Mn(2+): Asp284, Asp343, and Glu345. Arg347 is an active-site residue.

It belongs to the peptidase M17 family. It depends on Mn(2+) as a cofactor.

It localises to the cytoplasm. It catalyses the reaction Release of an N-terminal amino acid, Xaa-|-Yaa-, in which Xaa is preferably Leu, but may be other amino acids including Pro although not Arg or Lys, and Yaa may be Pro. Amino acid amides and methyl esters are also readily hydrolyzed, but rates on arylamides are exceedingly low.. The catalysed reaction is Release of an N-terminal amino acid, preferentially leucine, but not glutamic or aspartic acids.. In terms of biological role, presumably involved in the processing and regular turnover of intracellular proteins. Catalyzes the removal of unsubstituted N-terminal amino acids from various peptides. This Bacillus subtilis (strain 168) protein is Probable cytosol aminopeptidase (pepA).